We begin with the raw amino-acid sequence, 81 residues long: Antitoxin VapB28 (81 aa).

Functionally, antitoxin component of a type II toxin-antitoxin (TA) system. The chain is Antitoxin VapB28 (vapB28) from Mycobacterium tuberculosis (strain CDC 1551 / Oshkosh).